The sequence spans 338 residues: tRNA N6-adenosine threonylcarbamoyltransferase (338 aa).

Fe cation is bound by residues His-111 and His-115. Substrate is bound by residues 133 to 137 (LVSGG), Asp-166, Gly-179, Asp-183, and Asn-275. Asp-300 contacts Fe cation.

It belongs to the KAE1 / TsaD family. It depends on Fe(2+) as a cofactor.

It localises to the cytoplasm. The catalysed reaction is L-threonylcarbamoyladenylate + adenosine(37) in tRNA = N(6)-L-threonylcarbamoyladenosine(37) in tRNA + AMP + H(+). In terms of biological role, required for the formation of a threonylcarbamoyl group on adenosine at position 37 (t(6)A37) in tRNAs that read codons beginning with adenine. Is involved in the transfer of the threonylcarbamoyl moiety of threonylcarbamoyl-AMP (TC-AMP) to the N6 group of A37, together with TsaE and TsaB. TsaD likely plays a direct catalytic role in this reaction. This chain is tRNA N6-adenosine threonylcarbamoyltransferase, found in Treponema denticola (strain ATCC 35405 / DSM 14222 / CIP 103919 / JCM 8153 / KCTC 15104).